The sequence spans 93 residues: Large ribosomal subunit protein bL31B (93 aa).

It belongs to the bacterial ribosomal protein bL31 family. Type B subfamily. Part of the 50S ribosomal subunit.

This is Large ribosomal subunit protein bL31B from Psychrobacter cryohalolentis (strain ATCC BAA-1226 / DSM 17306 / VKM B-2378 / K5).